The chain runs to 684 residues: Probable phosphoenolpyruvate synthase (684 aa).

The active-site Tele-phosphohistidine intermediate is His-424. Residues Arg-517, Arg-564, and Glu-661 each coordinate substrate. Glu-661 serves as a coordination point for Mg(2+).

This sequence belongs to the PEP-utilizing enzyme family. The cofactor is Mg(2+).

The enzyme catalyses pyruvate + ATP + H2O = phosphoenolpyruvate + AMP + phosphate + 2 H(+). It functions in the pathway carbohydrate biosynthesis; gluconeogenesis. Catalyzes the phosphorylation of pyruvate to phosphoenolpyruvate. In Methanothermobacter thermautotrophicus (strain ATCC 29096 / DSM 1053 / JCM 10044 / NBRC 100330 / Delta H) (Methanobacterium thermoautotrophicum), this protein is Probable phosphoenolpyruvate synthase (ppsA).